The following is a 293-amino-acid chain: Cytosolic Fe-S cluster assembly factor CFD1 (293 aa).

25–32 (GKGGVGKS) contacts ATP. Positions 201 and 204 each coordinate [4Fe-4S] cluster. Serine 291 bears the Phosphoserine mark.

Belongs to the Mrp/NBP35 ATP-binding proteins family. NUBP2/CFD1 subfamily. Heterotetramer of 2 NBP35 and 2 CFD1 chains. [4Fe-4S] cluster serves as cofactor.

It is found in the cytoplasm. Functionally, component of the cytosolic iron-sulfur (Fe/S) protein assembly (CIA) machinery. Required for maturation of extramitochondrial Fe-S proteins. The NBP35-CFD1 heterotetramer forms a Fe-S scaffold complex, mediating the de novo assembly of an Fe-S cluster and its transfer to target apoproteins. Nucleotide binding/hydrolysis seems to be critcal for loading of Fe-S clusters onto CFD1 and NBP35. Required for biogenesis and export of both ribosomal subunits, which may reflect a role in assembly of the Fe/S clusters in RLI1, a protein which performs rRNA processing and ribosome export. This is Cytosolic Fe-S cluster assembly factor CFD1 from Saccharomyces cerevisiae (strain ATCC 204508 / S288c) (Baker's yeast).